Here is a 285-residue protein sequence, read N- to C-terminus: CCR4-NOT transcription complex subunit 7 (285 aa).

A divalent metal cation is bound by residues Asp-40, Glu-42, Asp-161, Asp-230, and Glu-278.

It belongs to the CAF1 family. As to quaternary structure, component of the CCR4-NOT complex. Mn(2+) is required as a cofactor. Mg(2+) serves as cofactor. Requires Co(2+) as cofactor.

Its subcellular location is the nucleus. It localises to the cytoplasm. The enzyme catalyses Exonucleolytic cleavage of poly(A) to 5'-AMP.. Its function is as follows. Has 3'-5' poly(A) exoribonuclease activity for synthetic poly(A) RNA substrate. Catalytic component of the CCR4-NOT complex which is one of the major cellular mRNA deadenylases and is linked to various cellular processes including bulk mRNA degradation, miRNA-mediated repression, translational repression during translational initiation and general transcription regulation. During miRNA-mediated repression the complex also seems to act as translational repressor during translational initiation. Additional complex functions may be a consequence of its influence on mRNA expression. This is CCR4-NOT transcription complex subunit 7 (CNOT7) from Gallus gallus (Chicken).